We begin with the raw amino-acid sequence, 38 residues long: MEALVYTFLLVSTLGIIFFAIFFREPPKVPPTPTKRIK.

The chain crosses the membrane as a helical span at residues 3-23 (ALVYTFLLVSTLGIIFFAIFF).

Belongs to the PsbT family. In terms of assembly, PSII is composed of 1 copy each of membrane proteins PsbA, PsbB, PsbC, PsbD, PsbE, PsbF, PsbH, PsbI, PsbJ, PsbK, PsbL, PsbM, PsbT, PsbY, PsbZ, Psb30/Ycf12, at least 3 peripheral proteins of the oxygen-evolving complex and a large number of cofactors. It forms dimeric complexes.

Its subcellular location is the plastid. The protein resides in the chloroplast thylakoid membrane. Its function is as follows. Found at the monomer-monomer interface of the photosystem II (PS II) dimer, plays a role in assembly and dimerization of PSII. PSII is a light-driven water plastoquinone oxidoreductase, using light energy to abstract electrons from H(2)O, generating a proton gradient subsequently used for ATP formation. The protein is Photosystem II reaction center protein T of Secale cereale (Rye).